The primary structure comprises 244 residues: EEF1A lysine methyltransferase 2 (244 aa).

The tract at residues 1-27 is disordered; the sequence is MNADAEGHSGAVVPAQSPEGSSAADDF. Ser21 is subject to Phosphoserine.

The protein belongs to the class I-like SAM-binding methyltransferase superfamily. EFM4 family.

It localises to the cytoplasm. The protein resides in the nucleus. The catalysed reaction is L-lysyl-[protein] + 3 S-adenosyl-L-methionine = N(6),N(6),N(6)-trimethyl-L-lysyl-[protein] + 3 S-adenosyl-L-homocysteine + 3 H(+). Its function is as follows. Protein-lysine methyltransferase that selectively catalyzes the trimethylation of EEF1A at 'Lys-318'. The chain is EEF1A lysine methyltransferase 2 from Mus musculus (Mouse).